The chain runs to 529 residues: Probable bifunctional tRNA threonylcarbamoyladenosine biosynthesis protein (529 aa).

Positions 1-324 (MIVLGLEGTA…FRIDEVDAPW (324 aa)) are kae1. Residues histidine 107, histidine 111, and tyrosine 128 each coordinate Fe cation. Residues 128-132 (YVSGG), aspartate 160, glycine 173, glutamate 177, and asparagine 257 contribute to the L-threonylcarbamoyladenylate site. Aspartate 285 contributes to the Fe cation binding site. In terms of domain architecture, Protein kinase spans 329 to 529 (SRKDYGKAGA…SAIRRRHRYV (201 aa)). ATP is bound by residues 335–342 (KAGAESRI) and lysine 355. Residue aspartate 447 is the Proton acceptor; for kinase activity of the active site.

The protein in the N-terminal section; belongs to the KAE1 / TsaD family. It in the C-terminal section; belongs to the protein kinase superfamily. Tyr protein kinase family. BUD32 subfamily. As to quaternary structure, component of the KEOPS complex that consists of Kae1, Bud32, Cgi121 and Pcc1; the whole complex dimerizes. The cofactor is Fe(2+).

The protein resides in the cytoplasm. It carries out the reaction L-seryl-[protein] + ATP = O-phospho-L-seryl-[protein] + ADP + H(+). The catalysed reaction is L-threonyl-[protein] + ATP = O-phospho-L-threonyl-[protein] + ADP + H(+). The enzyme catalyses L-threonylcarbamoyladenylate + adenosine(37) in tRNA = N(6)-L-threonylcarbamoyladenosine(37) in tRNA + AMP + H(+). Its function is as follows. Required for the formation of a threonylcarbamoyl group on adenosine at position 37 (t(6)A37) in tRNAs that read codons beginning with adenine. Is a component of the KEOPS complex that is probably involved in the transfer of the threonylcarbamoyl moiety of threonylcarbamoyl-AMP (TC-AMP) to the N6 group of A37. The Kae1 domain likely plays a direct catalytic role in this reaction. The Bud32 domain probably displays kinase activity that regulates Kae1 function. The polypeptide is Probable bifunctional tRNA threonylcarbamoyladenosine biosynthesis protein (Thermoplasma acidophilum (strain ATCC 25905 / DSM 1728 / JCM 9062 / NBRC 15155 / AMRC-C165)).